The following is a 355-amino-acid chain: Syntaxin-5 (355 aa).

The Cytoplasmic segment spans residues methionine 1–arginine 333. The segment covering proline 28–aspartate 37 has biased composition (polar residues). The disordered stretch occupies residues proline 28–leucine 47. The short motif at isoleucine 245–methionine 247 is the IxM motif; signal for cargo packaging into COPII-coated vesicles element. A t-SNARE coiled-coil homology domain is found at aspartate 263 to tyrosine 325. A coiled-coil region spans residues phenylalanine 287–alanine 318. The chain crosses the membrane as a helical; Anchor for type IV membrane protein span at residues tryptophan 334–leucine 354. A topological domain (vesicular) is located at residue alanine 355.

This sequence belongs to the syntaxin family. In terms of assembly, part of a ternary complex containing STX5A, NSFL1C and VCP. Part of a unique SNARE complex composed of the Golgi SNAREs GOSR1, GOSR2 and YKT6. This complex also includes VTI1A. Component of a SNARE complex consisting of STX5, YKT6, GOSR1 and BET1L. Interacts with BET1L. Interacts with BET1. Interacts with COG4. Interacts with GM130/GOLGA2. Interacts (via IxM motif) with SEC24C and SEC24D; mediates STX5 packaging into COPII-coated vesicles. Interacts with VLDLR; this interaction mediates VLDLR translocation from the endoplasmic reticulum to the plasma membrane.

The protein resides in the endoplasmic reticulum-Golgi intermediate compartment membrane. The protein localises to the golgi apparatus membrane. Its function is as follows. Mediates endoplasmic reticulum to Golgi transport. Together with p115/USO1 and GM130/GOLGA2, involved in vesicle tethering and fusion at the cis-Golgi membrane to maintain the stacked and inter-connected structure of the Golgi apparatus. The chain is Syntaxin-5 (STX5) from Bos taurus (Bovine).